The following is a 413-amino-acid chain: Protein CDKN2AIP homolog B (413 aa).

Positions 21–118 constitute an XRN2-binding (XTBD) domain; that stretch reads LERVRGQCES…TTRDELVAKV (98 aa). The segment at 118–266 is disordered; that stretch reads VKKRGNSSSN…PTRRFTTEHT (149 aa). The segment covering 183–193 has biased composition (basic and acidic residues); sequence NKREAHSRTDV.

Belongs to the CARF family.

Its subcellular location is the nucleus. It localises to the nucleoplasm. May regulate DNA damage response and cell proliferation. The chain is Protein CDKN2AIP homolog B (cdkn2aip-b) from Xenopus laevis (African clawed frog).